Here is a 363-residue protein sequence, read N- to C-terminus: DNA replication and repair protein RecF (363 aa).

30–37 (GINGSGKS) lines the ATP pocket.

It belongs to the RecF family.

It is found in the cytoplasm. Functionally, the RecF protein is involved in DNA metabolism; it is required for DNA replication and normal SOS inducibility. RecF binds preferentially to single-stranded, linear DNA. It also seems to bind ATP. This Pseudoalteromonas atlantica (strain T6c / ATCC BAA-1087) protein is DNA replication and repair protein RecF.